A 340-amino-acid polypeptide reads, in one-letter code: Probable complex I intermediate-associated protein 30, mitochondrial (340 aa).

The protein belongs to the CIA30 family.

The protein resides in the mitochondrion. Chaperone protein involved in the assembly of the mitochondrial NADH:ubiquinone oxidoreductase complex (complex I). Required for normal growth and reproduction. This Caenorhabditis elegans protein is Probable complex I intermediate-associated protein 30, mitochondrial (nuaf-1).